Reading from the N-terminus, the 352-residue chain is C-C chemokine receptor type 5 (352 aa).

At Met-1 to Ala-30 the chain is on the extracellular side. Tyr-3 carries the post-translational modification Sulfotyrosine. O-linked (GalNAc...) serine glycans are attached at residues Ser-6 and Ser-7. Sulfotyrosine is present on residues Tyr-10, Tyr-14, and Tyr-15. Disulfide bonds link Cys-20–Cys-269 and Cys-101–Cys-178. Residues Arg-31 to Cys-58 form a helical membrane-spanning segment. At Lys-59–Tyr-68 the chain is on the cytoplasmic side. Residues Leu-69–Tyr-89 traverse the membrane as a helical segment. The Extracellular portion of the chain corresponds to Ala-90 to Gln-102. A helical membrane pass occupies residues Leu-103–Ile-124. Residues Asp-125 to Thr-141 are Cytoplasmic-facing. A helical membrane pass occupies residues Val-142–Phe-166. The Extracellular portion of the chain corresponds to Thr-167–Ile-198. Residues Val-199–Leu-218 traverse the membrane as a helical segment. The Cytoplasmic segment spans residues Lys-219–Arg-235. A helical membrane pass occupies residues Leu-236–Phe-260. Over Gln-261 to Gln-277 the chain is Extracellular. Residues Ala-278–Gly-301 traverse the membrane as a helical segment. Topologically, residues Glu-302 to Leu-352 are cytoplasmic. Residues Cys-321, Cys-323, and Cys-324 are each lipidated (S-palmitoyl cysteine). Phosphoserine; by BARK1 is present on residues Ser-336, Ser-337, Ser-342, and Ser-349.

The protein belongs to the G-protein coupled receptor 1 family. As to quaternary structure, interacts with PRAF2. Efficient ligand binding to CCL3/MIP-1alpha and CCL4/MIP-1beta requires sulfation, O-glycosylation and sialic acid modifications. Glycosylation on Ser-6 is required for efficient binding of CCL4. Interacts with GRK2. Interacts with ARRB1 and ARRB2. Interacts with CNIH4. Interacts with S100A4; this interaction stimulates T-lymphocyte chemotaxis. In terms of processing, sulfated on at least 2 of the N-terminal tyrosines. Sulfation is required for efficient binding of the chemokines, CCL3 and CCL4. Post-translationally, palmitoylation in the C-terminal is important for cell surface expression. Phosphorylation on serine residues in the C-terminal is stimulated by binding CC chemokines especially by APO-RANTES. In terms of processing, O-glycosylated, but not N-glycosylated. Ser-6 appears to be the major site even if Ser-7 may be also O-glycosylated. Also sialylated glycans present which contribute to chemokine binding. Thr-16 and Ser-17 may also be glycosylated and, if so, with small moieties such as a T-antigen.

The protein resides in the cell membrane. Functionally, receptor for a number of inflammatory CC-chemokines including CCL3/MIP-1-alpha, CCL4/MIP-1-beta and RANTES and subsequently transduces a signal by increasing the intracellular calcium ion level. May play a role in the control of granulocytic lineage proliferation or differentiation. Participates in T-lymphocyte migration to the infection site by acting as a chemotactic receptor. The chain is C-C chemokine receptor type 5 (CCR5) from Pan paniscus (Pygmy chimpanzee).